We begin with the raw amino-acid sequence, 336 residues long: O-methyltransferase 2 (336 aa).

S-adenosyl-L-methionine is bound by residues G170, D198, N221, F222, and K237. Residue H241 is the Proton acceptor of the active site.

It belongs to the class I-like SAM-binding methyltransferase superfamily. Cation-independent O-methyltransferase family. COMT subfamily.

The catalysed reaction is (3,5-dichloro-2,4,6-trihydroxyphenyl)hexan-1-one + S-adenosyl-L-methionine = 1-(3,5-dichloro-2,6-dihydroxy-4-methoxyphenyl)hexan-1-one + S-adenosyl-L-homocysteine + H(+). The protein is O-methyltransferase 2 (omt2) of Dictyostelium discoideum (Social amoeba).